A 134-amino-acid polypeptide reads, in one-letter code: Large ribosomal subunit protein uL22 (134 aa).

The protein belongs to the universal ribosomal protein uL22 family. In terms of assembly, part of the 50S ribosomal subunit.

In terms of biological role, this protein binds specifically to 23S rRNA; its binding is stimulated by other ribosomal proteins, e.g. L4, L17, and L20. It is important during the early stages of 50S assembly. It makes multiple contacts with different domains of the 23S rRNA in the assembled 50S subunit and ribosome. Functionally, the globular domain of the protein is located near the polypeptide exit tunnel on the outside of the subunit, while an extended beta-hairpin is found that lines the wall of the exit tunnel in the center of the 70S ribosome. The chain is Large ribosomal subunit protein uL22 from Rhodococcus erythropolis (strain PR4 / NBRC 100887).